Consider the following 776-residue polypeptide: Acetone carboxylase alpha subunit (776 aa).

As to quaternary structure, heterohexamer of two alpha, two beta and two gamma subunits. The cofactor is Fe cation. Mg(2+) serves as cofactor. It depends on Zn(2+) as a cofactor. Post-translationally, the N-terminus is blocked.

It carries out the reaction acetone + hydrogencarbonate + 2 ATP + 3 H2O = acetoacetate + 2 AMP + 4 phosphate + 4 H(+). In terms of biological role, catalyzes the carboxylation of acetone to form acetoacetate. Has a reduced activity on butanone, and no activity on 2-pentatone, 3-pentatone, 2-hexanone, chloroacetone, pyruvate, phosphoenolpyruvate, acetaldehyde, propionaldehyde and propylene oxide. This is Acetone carboxylase alpha subunit from Xanthobacter autotrophicus (strain ATCC BAA-1158 / Py2).